Reading from the N-terminus, the 258-residue chain is Microtubule-associated protein RP/EB family member 1 (258 aa).

The Calponin-homology (CH) domain occupies Asn-14–Asp-116. The 71-residue stretch at Lys-175 to Ile-245 folds into the EB1 C-terminal domain.

Belongs to the MAPRE family.

It localises to the cytoplasm. The protein resides in the cytoskeleton. The protein localises to the microtubule organizing center. Its subcellular location is the centrosome. It is found in the golgi apparatus. It localises to the spindle. The protein resides in the spindle pole. In terms of biological role, plus-end tracking protein (+TIP) that binds to the plus-end of microtubules and regulates the dynamics of the microtubule cytoskeleton. Promotes cytoplasmic microtubule nucleation and elongation. Involved in mitotic spindle positioning by stabilizing microtubules and promoting dynamic connection between astral microtubules and the cortex during mitotic chromosome segregation. The chain is Microtubule-associated protein RP/EB family member 1 (MAPRE1) from Gallus gallus (Chicken).